Consider the following 438-residue polypeptide: Xylose isomerase (438 aa).

Catalysis depends on residues histidine 100 and aspartate 103. Mg(2+) is bound by residues glutamate 231, glutamate 267, histidine 270, aspartate 295, aspartate 306, aspartate 308, and aspartate 338.

It belongs to the xylose isomerase family. Homotetramer. Requires Mg(2+) as cofactor.

It localises to the cytoplasm. It carries out the reaction alpha-D-xylose = alpha-D-xylulofuranose. The sequence is that of Xylose isomerase from Pseudomonas syringae pv. tomato (strain ATCC BAA-871 / DC3000).